The primary structure comprises 229 residues: Large ribosomal subunit protein uL1 (229 aa).

It belongs to the universal ribosomal protein uL1 family. Part of the 50S ribosomal subunit.

Binds directly to 23S rRNA. The L1 stalk is quite mobile in the ribosome, and is involved in E site tRNA release. Functionally, protein L1 is also a translational repressor protein, it controls the translation of the L11 operon by binding to its mRNA. This chain is Large ribosomal subunit protein uL1, found in Lactococcus lactis subsp. lactis (strain IL1403) (Streptococcus lactis).